We begin with the raw amino-acid sequence, 399 residues long: DJ-1 protein homolog F (399 aa).

2 PfpI endopeptidase domains span residues 7 to 199 and 211 to 394; these read KSVL…ESLG and TSLL…TALG.

Belongs to the peptidase C56 family. As to quaternary structure, homotrimer.

Its function is as follows. May be involved in oxidative stress response. This chain is DJ-1 protein homolog F (DJ1F), found in Arabidopsis thaliana (Mouse-ear cress).